Consider the following 894-residue polypeptide: Myb-like protein K (894 aa).

Low complexity predominate over residues 93-139 (LQQQQQSPVTNVATNTPPTLQHSISSPSPNNFNNNNNANNQFLSPNS). 4 disordered regions span residues 93–221 (LQQQ…SASS), 299–353 (QVGN…QPIT), 492–539 (QQQQ…LEMI), and 601–659 (AATT…HWTS). Polar residues predominate over residues 140–149 (PQVAKSSPSQ). Residues 150–221 (NNPSTPIANT…SQSLNSSASS (72 aa)) show a composition bias toward low complexity. Positions 300-309 (VGNPMQQSND) are enriched in polar residues. 2 stretches are compositionally biased toward low complexity: residues 310–353 (MQPQ…QPIT) and 492–527 (QQQQ…PQQM). 2 stretches are compositionally biased toward basic and acidic residues: residues 611–640 (GKEE…SKKD) and 649–659 (ASKEKTSHWTS). In terms of domain architecture, HTH myb-type spans 649 to 704 (ASKEKTSHWTSEEHNKFLEAVQQFGIKDYHAIAKFVQTRNHHQVRTHVNTYLKNQK). Positions 677–700 (YHAIAKFVQTRNHHQVRTHVNTYL) form a DNA-binding region, H-T-H motif. A disordered region spans residues 703–852 (QKKAEAATSS…EYNSGFDSNS (150 aa)). Composition is skewed to low complexity over residues 710–742 (TSST…QPPI), 751–805 (QQQQ…QQPQ), and 815–845 (PPNN…NEYN).

The protein resides in the nucleus. In Dictyostelium discoideum (Social amoeba), this protein is Myb-like protein K (mybK).